A 78-amino-acid polypeptide reads, in one-letter code: Protein GPR15LG (78 aa).

Residues 1–24 (MRLLALSGLLCMLLLCFCIFSSEG) form the signal peptide. Intrachain disulfides connect Cys-37-Cys-60 and Cys-38-Cys-57.

As to quaternary structure, interacts with SUSD2; the interaction is direct. In terms of tissue distribution, highly abundant in the testis, colon, eye, and tongue. Detected in the epithelial layer of the colon, but not the small intestine.

It localises to the secreted. Its function is as follows. Highly cationic protein that has multiple functions. Acts as a chemotactic factor that mediates lymphocytes recruitment to epithelia through binding and activation of the G-protein coupled receptor GPR15. May be a tumor suppressor; together with SUSD2 has a growth inhibitory effect on colon cancer cells which includes G1 cell cycle arrest. May regulate keratinocyte proliferation. In addition, through activation of Mas-related G protein-coupled receptors (MRGPRs) contributes to pruritogenesis by activating itch-selective sensory neurons and mast cells degranulation. Functionally, has antimicrobial activity against Gram-positive bacteria, including Staphylococcus aureus and Actinomyces spec., and Mycoplasma hominis and lentivirus. The protein is Protein GPR15LG (Gpr15lg) of Mus musculus (Mouse).